Consider the following 631-residue polypeptide: Transmembrane and coiled-coil domain-containing protein 4 (631 aa).

A disordered region spans residues 1–26; that stretch reads MATWNRPHPRLPVAPEPVAEGESQQP. The stretch at 153-183 forms a coiled coil; the sequence is EEVFLESLKDAKEEESETAEESRKRKEKRRK. 4 consecutive transmembrane segments (helical) span residues 187-203, 204-220, 228-248, and 343-363; these read YLLIGLATVGGGTVIGV, TGGLAAPLVAAGAATII, LGSVAGIAVMTSLFGAAGAGL, and LSGIVAALTLPASLLSVANVI. Positions 523-631 are disordered; that stretch reads WSEKGLPLAP…ETQESCAELD (109 aa). Over residues 571 to 590 the composition is skewed to polar residues; sequence IPSSASQAQVPAGLDQSTED.

It belongs to the TMCO4 family.

Its subcellular location is the membrane. The protein is Transmembrane and coiled-coil domain-containing protein 4 (Tmco4) of Rattus norvegicus (Rat).